A 285-amino-acid chain; its full sequence is Golgi phosphoprotein 3-like (285 aa).

Positions 1 to 39 are disordered; it reads MTTLTHRARRTEVGKNSEKKVESEENVNQDRNQDNEDIG. The segment covering 10 to 23 has biased composition (basic and acidic residues); it reads RTEVGKNSEKKVES. A 1,2-diacyl-sn-glycero-3-phospho-(1D-myo-inositol 4-phosphate) contacts are provided by W67 and R76. S112 carries the phosphoserine modification. The a 1,2-diacyl-sn-glycero-3-phospho-(1D-myo-inositol 4-phosphate) site is built by R157 and R160. A beta-hairpin required for oligomerization region spans residues 176-187; it reads EKQNFLLFDMTT.

The protein belongs to the GOLPH3/VPS74 family. In terms of assembly, homooligomer. Does not interact MYO18; differs from GOLPH3 by its inability to interact with MYO18. May interact with ARF1.

The protein resides in the golgi apparatus. It is found in the golgi stack membrane. It localises to the trans-Golgi network membrane. Phosphatidylinositol-4-phosphate-binding protein that may antagonize the action of GOLPH3 which is required for the process of vesicle budding at the Golgi and anterograde transport to the plasma membrane. The protein is Golgi phosphoprotein 3-like (GOLPH3L) of Bos taurus (Bovine).